Reading from the N-terminus, the 576-residue chain is Sodium/proton antiporter 1 (576 aa).

Residues 1–60 (MAVFPIGSHFAPPHQLTKRHVIATSSPISISTRLPQNVSFSKVSGVTGSTRLSKHGVLVR) constitute a chloroplast transit peptide. 9 consecutive transmembrane segments (helical) span residues 237–257 (TLLWVVGFVTFFLSSILDNLT), 279–299 (LGGVVVIAANAGGAWTPIGDV), 320–340 (FLPSVVSLAVPLALMSLTSEV), 357–377 (APRGKLVFGVGLGALVFVPVF), 379–399 (ALTGLPPYMGILLGLGVLWIL), 426–446 (GALFFLGILLSVSSLEAAGIL), 462–482 (LIASAIGVVSAIIDNVPLVAA), 501–521 (LIAFCAGTGGSMLVIGSAAGV), and 541–561 (FAFAGYAAGIAAYLAVHNLHF).

The protein belongs to the NhaD Na(+)/H(+) (TC 2.A.62) antiporter family. In terms of tissue distribution, mostly expressed in mature and senescent leaves, and, to a lower extent, in seeds, roots, shoots, flowers and developing siliques.

The protein resides in the plastid. Its subcellular location is the chloroplast membrane. It localises to the chloroplast envelope. Its function is as follows. Na(+)/H(+) antiporter that extrudes sodium in exchange for external protons. This chain is Sodium/proton antiporter 1, found in Arabidopsis thaliana (Mouse-ear cress).